Consider the following 259-residue polypeptide: MHIDWWTLGLQAINVLILIWILSRFLFKPVAAIVEARRASIARLLDEAHATRVAAEAEREKARQEVTSLATARAAALQKAEDEAKAETETILANARSEAGKLREAAKADIARARQDEAAAMADHASQLAVDIAGKLLSRLPEEARISGFIEGLAQGLAALPEAIRTNIGATDAPVQLKAARALTEAETQACRVRLSEALGHPAEIAVDVRPELIAGLEIDMPHAVVRNSFRADLTRITAALIQTGSMQTGQEAPRPETP.

Residues 5–27 (WWTLGLQAINVLILIWILSRFLF) form a helical membrane-spanning segment.

The protein belongs to the ATPase B chain family. As to quaternary structure, F-type ATPases have 2 components, F(1) - the catalytic core - and F(0) - the membrane proton channel. F(1) has five subunits: alpha(3), beta(3), gamma(1), delta(1), epsilon(1). F(0) has three main subunits: a(1), b(2) and c(10-14). The alpha and beta chains form an alternating ring which encloses part of the gamma chain. F(1) is attached to F(0) by a central stalk formed by the gamma and epsilon chains, while a peripheral stalk is formed by the delta and b chains.

It localises to the cell inner membrane. Its function is as follows. F(1)F(0) ATP synthase produces ATP from ADP in the presence of a proton or sodium gradient. F-type ATPases consist of two structural domains, F(1) containing the extramembraneous catalytic core and F(0) containing the membrane proton channel, linked together by a central stalk and a peripheral stalk. During catalysis, ATP synthesis in the catalytic domain of F(1) is coupled via a rotary mechanism of the central stalk subunits to proton translocation. Functionally, component of the F(0) channel, it forms part of the peripheral stalk, linking F(1) to F(0). The polypeptide is ATP synthase subunit b 3 (Beijerinckia indica subsp. indica (strain ATCC 9039 / DSM 1715 / NCIMB 8712)).